Consider the following 545-residue polypeptide: Chaperonin GroEL (545 aa).

Residues Thr30–Pro33, Lys51, Asp87–Thr91, Gly415, and Asp495 each bind ATP.

The protein belongs to the chaperonin (HSP60) family. Forms a cylinder of 14 subunits composed of two heptameric rings stacked back-to-back. Interacts with the co-chaperonin GroES.

Its subcellular location is the cytoplasm. It carries out the reaction ATP + H2O + a folded polypeptide = ADP + phosphate + an unfolded polypeptide.. Functionally, together with its co-chaperonin GroES, plays an essential role in assisting protein folding. The GroEL-GroES system forms a nano-cage that allows encapsulation of the non-native substrate proteins and provides a physical environment optimized to promote and accelerate protein folding. This Yersinia pestis bv. Antiqua (strain Antiqua) protein is Chaperonin GroEL.